The chain runs to 143 residues: Large ribosomal subunit protein uL11 (143 aa).

Belongs to the universal ribosomal protein uL11 family. In terms of assembly, part of the ribosomal stalk of the 50S ribosomal subunit. Interacts with L10 and the large rRNA to form the base of the stalk. L10 forms an elongated spine to which L12 dimers bind in a sequential fashion forming a multimeric L10(L12)X complex. Post-translationally, one or more lysine residues are methylated.

Its function is as follows. Forms part of the ribosomal stalk which helps the ribosome interact with GTP-bound translation factors. This chain is Large ribosomal subunit protein uL11, found in Borreliella burgdorferi (strain ATCC 35210 / DSM 4680 / CIP 102532 / B31) (Borrelia burgdorferi).